A 156-amino-acid chain; its full sequence is Small ribosomal subunit protein uS7 (156 aa).

It belongs to the universal ribosomal protein uS7 family. In terms of assembly, part of the 30S ribosomal subunit. Contacts proteins S9 and S11.

Its function is as follows. One of the primary rRNA binding proteins, it binds directly to 16S rRNA where it nucleates assembly of the head domain of the 30S subunit. Is located at the subunit interface close to the decoding center, probably blocks exit of the E-site tRNA. The protein is Small ribosomal subunit protein uS7 of Mycobacterium leprae (strain Br4923).